Reading from the N-terminus, the 236-residue chain is Phosphoribosylaminoimidazole-succinocarboxamide synthase (236 aa).

It belongs to the SAICAR synthetase family.

It carries out the reaction 5-amino-1-(5-phospho-D-ribosyl)imidazole-4-carboxylate + L-aspartate + ATP = (2S)-2-[5-amino-1-(5-phospho-beta-D-ribosyl)imidazole-4-carboxamido]succinate + ADP + phosphate + 2 H(+). The protein operates within purine metabolism; IMP biosynthesis via de novo pathway; 5-amino-1-(5-phospho-D-ribosyl)imidazole-4-carboxamide from 5-amino-1-(5-phospho-D-ribosyl)imidazole-4-carboxylate: step 1/2. This is Phosphoribosylaminoimidazole-succinocarboxamide synthase from Rickettsia bellii (strain OSU 85-389).